Reading from the N-terminus, the 64-residue chain is Large ribosomal subunit protein bL35 (64 aa).

Residues Thr-19–Leu-44 are disordered. The segment covering Lys-23–Leu-44 has biased composition (basic residues).

The protein belongs to the bacterial ribosomal protein bL35 family.

In Protochlamydia amoebophila (strain UWE25), this protein is Large ribosomal subunit protein bL35.